The sequence spans 372 residues: Actin-related protein T3 (372 aa).

The protein belongs to the actin family. As to quaternary structure, interacts with PFN3. In terms of tissue distribution, ubiquitously expressed.

Its subcellular location is the cytoplasm. The protein localises to the cytoskeleton. It localises to the nucleus. This is Actin-related protein T3 (ACTRT3) from Homo sapiens (Human).